The following is a 1141-amino-acid chain: DNA-directed RNA polymerase subunit beta (1141 aa).

The protein belongs to the RNA polymerase beta chain family. As to quaternary structure, the RNAP catalytic core consists of 2 alpha, 1 beta, 1 beta' and 1 omega subunit. When a sigma factor is associated with the core the holoenzyme is formed, which can initiate transcription.

The enzyme catalyses RNA(n) + a ribonucleoside 5'-triphosphate = RNA(n+1) + diphosphate. In terms of biological role, DNA-dependent RNA polymerase catalyzes the transcription of DNA into RNA using the four ribonucleoside triphosphates as substrates. In Frankia casuarinae (strain DSM 45818 / CECT 9043 / HFP020203 / CcI3), this protein is DNA-directed RNA polymerase subunit beta.